The following is a 92-amino-acid chain: Alpha-conotoxin FrXXA 2 (92 aa).

The first 24 residues, 1–24 (MPKLEMMLLVLLILPLPYFDAAGG), serve as a signal peptide directing secretion. The propeptide occupies 25 to 45 (QAVQGDGHGDGMDRYLQRDDR). Cystine bridges form between Cys63–Cys72, Cys68–Cys80, Cys73–Cys90, and Cys78–Cys92.

The protein belongs to the conotoxin D superfamily. As to quaternary structure, homodimer; disulfide-linked. Post-translationally, the homodimer contains 10 disulfide bonds. In terms of tissue distribution, expressed by the venom duct.

The protein localises to the secreted. Functionally, alpha-conotoxins act on postsynaptic membranes, they bind to the nicotinic acetylcholine receptors (nAChR) and thus inhibit them. Through its two C-terminal domains, this homodimeric protein would bind to two nAChR allosteric sites, located outside the nAChR C-loop of the principal binding face and at the adjacent binding interface in a clockwise direction. Component 4b which seems to correspond to this toxin blocks both neuronal and muscular subtypes: human alpha-7/CHRNA7 (IC(50)=125 nM), human alpha-3-beta-2 (CHRNA3-CHRNB2) (IC(50)=282 nM), human alpha-4-beta-2 (CHRNA4-CHRNB2) (IC(50)=697 nM), mouse adult muscular subtype alpha-1-beta-1-delta-epsilon (CHRNA1-CHRNB1-CHRND-CHRNE) (IC(50)=351 nM), and mouse fetal muscular subtype alpha-1-beta-1-gamma-delta (CHRNA1-CHRNB1-CHRNG-CHRND) (IC(50)=447 nM). It shows different dissociation rates towards the different subtypes, with a very slow rate towards alpha-7 subtype (almost irreversible), followed by the adult muscular subtype, the fetal muscular subtype, alpha-3-beta-2 and alpha-4-beta-2 (almost entirely reversible within a few minutes of washing). This chain is Alpha-conotoxin FrXXA 2, found in Conus fergusoni (Ferguson's cone).